The primary structure comprises 319 residues: Beta-ketoacyl-[acyl-carrier-protein] synthase III (319 aa).

Catalysis depends on residues cysteine 115 and histidine 246. The segment at 247-251 (QANLR) is ACP-binding. Residue asparagine 276 is part of the active site.

Belongs to the thiolase-like superfamily. FabH family. Homodimer.

It is found in the cytoplasm. The catalysed reaction is malonyl-[ACP] + acetyl-CoA + H(+) = 3-oxobutanoyl-[ACP] + CO2 + CoA. The protein operates within lipid metabolism; fatty acid biosynthesis. Functionally, catalyzes the condensation reaction of fatty acid synthesis by the addition to an acyl acceptor of two carbons from malonyl-ACP. Catalyzes the first condensation reaction which initiates fatty acid synthesis and may therefore play a role in governing the total rate of fatty acid production. Possesses both acetoacetyl-ACP synthase and acetyl transacylase activities. Its substrate specificity determines the biosynthesis of branched-chain and/or straight-chain of fatty acids. This chain is Beta-ketoacyl-[acyl-carrier-protein] synthase III, found in Coxiella burnetii (strain CbuK_Q154) (Coxiella burnetii (strain Q154)).